Here is a 182-residue protein sequence, read N- to C-terminus: UPF0149 protein CGSHiEE_07975 (182 aa).

The protein belongs to the UPF0149 family.

This chain is UPF0149 protein CGSHiEE_07975, found in Haemophilus influenzae (strain PittEE).